A 226-amino-acid chain; its full sequence is uncharacterized protein (226 aa).

This sequence belongs to the mimivirus L246/L426 family.

This is an uncharacterized protein from Acanthamoeba polyphaga mimivirus (APMV).